A 143-amino-acid polypeptide reads, in one-letter code: Sporulation-specific cell division protein SsgB (143 aa).

This sequence belongs to the SsgA family. In terms of assembly, interacts with SsgA. Interacts with FtsZ (via N-terminus).

The protein localises to the cell septum. In terms of biological role, involved in sporulation-specific cell division. Required for early stages of sporulation. Important in the process of growth cessation prior to sporulation-specific cell division. Recruits cell division protein FtsZ to the future septum sites and tethers the contractile ring structure (Z ring) to the cytoplasmic membrane during sporulation. Stimulates polymerization and filament length of FtsZ in vitro. The polypeptide is Sporulation-specific cell division protein SsgB (Salinispora tropica (strain ATCC BAA-916 / DSM 44818 / JCM 13857 / NBRC 105044 / CNB-440)).